The following is a 230-amino-acid chain: MAIQHRDPRGGGGSRDARTNRRIKAREVRVIGAEGEQLGVLPIDQALARAQELGMDLVEVSPMAKPPVCKIMDYGRFKYLEKKKQNEAKKKQVVVQLKEVKLRPRTEEHDYDTKIKKVRAFLGEANKARITVMFRGREMSHRELGQKVLQRVIEDLRDVAVIESAPRMEGRQMFMILAPNPKMLQSQRDKAKAAAAAAPAAAPAAGAPAPAPAPAAPAPAPTAADPAAQR.

Disordered regions lie at residues 1–21 (MAIQHRDPRGGGGSRDARTNR) and 184–230 (LQSQ…AAQR). The span at 193 to 208 (AAAAAAPAAAPAAGAP) shows a compositional bias: low complexity. Residues 209–220 (APAPAPAAPAPA) show a composition bias toward pro residues. Positions 221–230 (PTAADPAAQR) are enriched in low complexity.

It belongs to the IF-3 family. As to quaternary structure, monomer.

It is found in the cytoplasm. IF-3 binds to the 30S ribosomal subunit and shifts the equilibrium between 70S ribosomes and their 50S and 30S subunits in favor of the free subunits, thus enhancing the availability of 30S subunits on which protein synthesis initiation begins. This chain is Translation initiation factor IF-3, found in Anaeromyxobacter dehalogenans (strain 2CP-1 / ATCC BAA-258).